Reading from the N-terminus, the 516-residue chain is (R)-citramalate synthase CimA (516 aa).

In terms of domain architecture, Pyruvate carboxyltransferase spans 8-269 (LEILDVTLRD…KTNINEIAIT (262 aa)). Catalysis depends on arginine 16, which acts as the Proton donor. Pyruvate contacts are provided by residues 16–17 (RD) and tyrosine 144. Aspartate 17 lines the Mn(2+) pocket. Glutamate 146 functions as the Proton acceptor in the catalytic mechanism. Threonine 179 is a binding site for pyruvate. Mn(2+) is bound by residues histidine 207 and histidine 209.

The protein belongs to the alpha-IPM synthase/homocitrate synthase family. Homodimer. Mn(2+) serves as cofactor.

It catalyses the reaction pyruvate + acetyl-CoA + H2O = (3R)-citramalate + CoA + H(+). It functions in the pathway amino-acid biosynthesis; L-isoleucine biosynthesis; 2-oxobutanoate from pyruvate: step 1/3. With respect to regulation, regulated by the end-product isoleucine via a feedback inhibition. The binding of isoleucine has inhibitory effects on the binding of both pyruvate and acetyl-CoA. May act via conformational change of the dimer interface of the regulatory domain, leading to inhibition of the catalytic reaction. Its function is as follows. Catalyzes the condensation of pyruvate and acetyl-coenzyme A to form (R)-citramalate. Shows strict substrate specificity for pyruvate. Cannot use alpha-ketoisovalerate, alpha-ketobutyrate, alpha-ketoisocaproate, alpha-ketoglutarate or glyoxylate. This is (R)-citramalate synthase CimA from Leptospira interrogans serogroup Icterohaemorrhagiae serovar Lai (strain 56601).